We begin with the raw amino-acid sequence, 1783 residues long: Collagen alpha-1(XXVII) chain A (1783 aa).

The N-terminal stretch at 1-35 is a signal peptide; that stretch reads MNLATRRRVRRTSRLVAKRALLLCILLYCTSFGFT. Residues 73 to 235 form the Laminin G-like domain; sequence TTRARVTTPT…NICSAIRRQC (163 aa). Disordered stretches follow at residues 288 to 312, 327 to 524, 553 to 744, 772 to 1461, and 1512 to 1546; these read SSSVRMSDGVRPKPSSTTPPPLALM, HKPS…PRTP, VGAP…APGP, PGNM…GDIG, and GNPGSRGDTGNKGELGVQGPRGAPGPRGPPGLPGP. The segment covering 403–415 has biased composition (low complexity); the sequence is KPTSVPKPNPTKN. Residues 436–447 show a composition bias toward pro residues; that stretch reads LPAPKPTVPKRP. Residues 462-494 are compositionally biased toward polar residues; that stretch reads HTTPLTPKSTLAPNSTSKKPLPTLKSTSFTTAA. A triple-helical region region spans residues 553–1547; it reads VGAPGLKGDQ…RGPPGLPGPP (995 aa). Positions 554–608 constitute a Collagen-like 1 domain; sequence GAPGLKGDQGESGLPGPPGKPGQPGMRGPRGPPGPHGKPGRPGPTGLKGKKGDPG. Composition is skewed to low complexity over residues 622–633, 651–661, 735–744, 817–829, and 861–870; these read VGLPGPVGLVGV, EPGEQGPVGEA, EPGVIGAPGP, PGPQGKTGEIGPS, and ARGLPGPRGA. 2 consecutive Collagen-like domains span residues 818–873 and 845–902; these read GPQG…AAGR and GKPG…GALG. A compositionally biased stretch (gly residues) spans 926-935; it reads GFIGPGGEAG. The span at 967 to 976 shows a compositional bias: pro residues; the sequence is GGPPGPPGSP. Composition is skewed to low complexity over residues 978 to 988 and 1098 to 1129; these read SPGSRGPIGIR and SIGLAGNAGAAGLIGARGEPGLEGEAGPAGPD. Residues 986-1043 form the Collagen-like 4 domain; it reads GIRGPKGRRGPRGPDGVPGEIGTEGKKGPDGPPGKIGFPGHAGKIGESGEVGPKGFPG. Basic and acidic residues-rich tracts occupy residues 1131 to 1158, 1170 to 1182, and 1257 to 1267; these read TKGEKGDMGTEGEQGVRGDPGIKGKDGP, PEGKSGKSGERGK, and AKGEQGDDGKV. The Collagen-like 5 domain occupies 1269 to 1326; that stretch reads GPTGAPGLRGPVGKRGDRGEPGDPGYVGQQGVDGLRGKPGAPGLPGDPGPRGTQGPKG. Low complexity-rich tracts occupy residues 1334 to 1349 and 1396 to 1409; these read KGKQGQQGERGSRGSP and LPGKPGAPGKVGVI. 2 Collagen-like domains span residues 1446–1503 and 1497–1549; these read GPQG…GLAG and GRGG…PPGI. Residues 1537-1546 show a composition bias toward pro residues; it reads PRGPPGLPGP. A propeptide spans 1551–1783 (C-terminal propeptide); sequence LAMNQDFGLG…HLEVGPVCFL (233 aa). A Fibrillar collagen NC1 domain is found at 1589 to 1783; the sequence is PEILRTLDYL…HLEVGPVCFL (195 aa). 3 disulfides stabilise this stretch: cysteine 1619/cysteine 1651, cysteine 1660/cysteine 1781, and cysteine 1696/cysteine 1734. Ca(2+)-binding residues include aspartate 1637, asparagine 1639, cysteine 1642, and aspartate 1645. The N-linked (GlcNAc...) asparagine glycan is linked to asparagine 1698.

This sequence belongs to the fibrillar collagen family. Expressed dynamically in the notochord from late epiboly, spreading to the anterior notochord by 24 hpf, and then throughout the notochord by 30 hpf. Subsequently, notochordal expression becomes restricted to the distal tip of the tail by 48 hpf and is no longer detectable by 72 hpf. Also expressed throughout the floor plate and hypochord at 24 hpf, and in forming head cartilages and the first forming tooth.

Its subcellular location is the secreted. It is found in the extracellular space. The protein resides in the extracellular matrix. Its function is as follows. May play a role during the calcification of cartilage and the transition of cartilage to bone. Together with col27a1b, plays a role in development of the notochord and axial skeleton. This chain is Collagen alpha-1(XXVII) chain A, found in Danio rerio (Zebrafish).